The sequence spans 984 residues: MCVPAKQGTLHAKSPLPGLKIAGLLLRPRAANASSVDPRVIIYLERLLALKKVDASDVLSSAFQYSKDRLPKTGDDGSSKDSGWHNPPELEEVVFHRLSKAFQAEERPVNSTEGLRTLVVVTRWMQTMVTSHTSDTMIQAMAGIQQQPQQQSINVREGLGMLVVGVIENQKMLNILNKHHIKNCKSPGRSRKSNTTFTTNLATGEWRSERRSRTETQDLKSLRSNFEAVDWIFPTINTRAGLYIFLNSLIDSQNMATDLITAAFDILANAMYRSEPSQNMFCLKSFLINKIPILLLQISSSMFPMTAELSITQALSHVDPNAFPAFSQGFDDMLGNTNSLADVRQDFLNACALHGLITTATVERLLGETPMQGPPGTKYDKSTLLEQCKSNFDKISMYIDELDNLDGNAGAIVGAIAEFIPHLCETQMTMYLKQLSSLLFKKPQAIDVILQFTSPASILRPLCQILDDWHYDSDQGEYQPVYDEFGAVLVLVMTFMYRYDLTYHDIGIGAESFVARLMTKGNQSMLPDEMTDEQSKHLGHWLKGLYDAGNEGLSNDVFASCSPREFYFIVPTLFKQTVMALSAGILTFESVKGGLEYLMETFLLPSLIGGLIWMSSYALIQSHSDLDAIMRIFREVISSAPSSGDAQAMHSTILSIVSSRLEKCLRTIQRRDASRANSIEPLIQAIKGNLHSERSMFASMKELEQWTNAPNSTLHTSLRHTVQQLSQWASTSSIQPNPPSYTHRQVYVSLKIMGASKVIKAIVDELKAQTEASNGAAALDVGVSIICAPTVDDSPVPVAWLSSPIPASNPPRTRLNLREMLKHEFDNAAALVATDPLAAETVVRLHRRVEAQLSSIAENALQGHGSVLNLPNVNMGDMQSQSIPDDITKAIDDAAAASIADDITTMDNKALQRSMDDLTGPDGLDLSSIGMGTGDAGTGDMGAELGNLPDLDLGDMSGMGMDMDMDMAMGGGGDDDWGLDFDNM.

It belongs to the Mediator complex subunit 5 family. As to quaternary structure, component of the Mediator complex.

The protein resides in the nucleus. Its function is as follows. Component of the Mediator complex, a coactivator involved in the regulated transcription of nearly all RNA polymerase II-dependent genes. Mediator functions as a bridge to convey information from gene-specific regulatory proteins to the basal RNA polymerase II transcription machinery. Mediator is recruited to promoters by direct interactions with regulatory proteins and serves as a scaffold for the assembly of a functional preinitiation complex with RNA polymerase II and the general transcription factors. The sequence is that of Mediator of RNA polymerase II transcription subunit 5 (NUT1) from Phaeosphaeria nodorum (strain SN15 / ATCC MYA-4574 / FGSC 10173) (Glume blotch fungus).